The sequence spans 309 residues: ATP synthase gamma chain (309 aa).

This sequence belongs to the ATPase gamma chain family. F-type ATPases have 2 components, CF(1) - the catalytic core - and CF(0) - the membrane proton channel. CF(1) has five subunits: alpha(3), beta(3), gamma(1), delta(1), epsilon(1). CF(0) has three main subunits: a, b and c.

It is found in the cell membrane. Its function is as follows. Produces ATP from ADP in the presence of a proton gradient across the membrane. The gamma chain is believed to be important in regulating ATPase activity and the flow of protons through the CF(0) complex. The chain is ATP synthase gamma chain from Salinispora arenicola (strain CNS-205).